The chain runs to 95 residues: Translation initiation factor 1A (95 aa).

The 75-residue stretch at 6–80 folds into the S1-like domain; it reads SRKNLRMPEE…EKADITWRYE (75 aa).

Belongs to the eIF-1A family.

Seems to be required for maximal rate of protein biosynthesis. Enhances ribosome dissociation into subunits and stabilizes the binding of the initiator Met-tRNA(I) to 40 S ribosomal subunits. In Haloarcula marismortui (strain ATCC 43049 / DSM 3752 / JCM 8966 / VKM B-1809) (Halobacterium marismortui), this protein is Translation initiation factor 1A.